A 48-amino-acid chain; its full sequence is Palustrin-3a (48 aa).

Cysteines 43 and 48 form a disulfide.

As to expression, expressed by the skin glands.

It localises to the secreted. Its function is as follows. Antimicrobial activity against Gram-negative bacterium E.coli. This Lithobates palustris (Pickerel frog) protein is Palustrin-3a.